A 305-amino-acid polypeptide reads, in one-letter code: Taste receptor type 2 member 136 (305 aa).

Residues 1-9 (MMSFLVSIA) are Extracellular-facing. A helical transmembrane segment spans residues 10–30 (SIAMLVKIVLGTFANVFIVLV). Over 31–46 (NFTDCIKKRKFLLADR) the chain is Cytoplasmic. Residues 47–67 (ILTVLAIFRFDLLWIILMNWS) traverse the membrane as a helical segment. Topologically, residues 68 to 69 (SS) are extracellular. A helical membrane pass occupies residues 70 to 90 (VFHVGLYFQVRFCICVVWIVT). At 91 to 99 (NHFNTWLAN) the chain is on the cytoplasmic side. A helical transmembrane segment spans residues 100 to 120 (ILSILYLLKIDNFSNLIFLGL). Topologically, residues 121–127 (KGKIKCP) are extracellular. The helical transmembrane segment at 128–148 (YIVLLPCFVLLFPNLIMVTIC) threads the bilayer. Residues 149–176 (ETTQANGHQGNLTGKTKLTYFTNLIAMT) lie on the Cytoplasmic side of the membrane. Residues 177–197 (FTLGSLVPFTTFMICFLLLIC) traverse the membrane as a helical segment. The Extracellular segment spans residues 198 to 223 (SLCKHLRTMRLYGKGSQGPSASTHIK). A helical membrane pass occupies residues 224-244 (VLQVLISFLLLFSMFILLLII). The Cytoplasmic portion of the chain corresponds to 245–305 (SDYNYTKSLE…ARFWLKEKKP (61 aa)).

Belongs to the G-protein coupled receptor T2R family.

It localises to the membrane. Its function is as follows. Putative taste receptor which may play a role in the perception of bitterness. The chain is Taste receptor type 2 member 136 (Tas2r136) from Mus musculus (Mouse).